The primary structure comprises 383 residues: Serine protease 23 (383 aa).

Positions 1–19 (MAGIPGLLFLLFFLLCAVG) are cleaved as a signal peptide. Asn93 carries an N-linked (GlcNAc...) asparagine glycan. Residue Ser109 is modified to Phosphoserine; by FAM20C. Cys160 and Cys176 form a disulfide bridge. The active-site Charge relay system is the His175. Asn207 carries N-linked (GlcNAc...) asparagine glycosylation. Catalysis depends on charge relay system residues Asp240 and Ser316.

Belongs to the peptidase S1 family.

It is found in the secreted. The protein is Serine protease 23 (PRSS23) of Homo sapiens (Human).